Reading from the N-terminus, the 484-residue chain is Protein nucleotidyltransferase YdiU (484 aa).

ATP-binding residues include glycine 81, glycine 83, arginine 84, lysine 103, aspartate 115, glycine 116, arginine 166, and arginine 173. The Proton acceptor role is filled by aspartate 244. Asparagine 245 and aspartate 254 together coordinate Mg(2+). Aspartate 254 lines the ATP pocket.

It belongs to the SELO family. Requires Mg(2+) as cofactor. Mn(2+) is required as a cofactor.

It catalyses the reaction L-seryl-[protein] + ATP = 3-O-(5'-adenylyl)-L-seryl-[protein] + diphosphate. It carries out the reaction L-threonyl-[protein] + ATP = 3-O-(5'-adenylyl)-L-threonyl-[protein] + diphosphate. The catalysed reaction is L-tyrosyl-[protein] + ATP = O-(5'-adenylyl)-L-tyrosyl-[protein] + diphosphate. The enzyme catalyses L-histidyl-[protein] + UTP = N(tele)-(5'-uridylyl)-L-histidyl-[protein] + diphosphate. It catalyses the reaction L-seryl-[protein] + UTP = O-(5'-uridylyl)-L-seryl-[protein] + diphosphate. It carries out the reaction L-tyrosyl-[protein] + UTP = O-(5'-uridylyl)-L-tyrosyl-[protein] + diphosphate. In terms of biological role, nucleotidyltransferase involved in the post-translational modification of proteins. It can catalyze the addition of adenosine monophosphate (AMP) or uridine monophosphate (UMP) to a protein, resulting in modifications known as AMPylation and UMPylation. This is Protein nucleotidyltransferase YdiU from Shewanella sp. (strain MR-4).